The chain runs to 360 residues: D-alanine--D-alanine ligase (360 aa).

Positions 146–352 (KLCVADAGIA…FPELAERLLQ (207 aa)) constitute an ATP-grasp domain. 179–234 (EEKFIYPFFVKPANLGSSIGISKVHHREQLPAALKSACSLDSKIVVEKAITGREIE) is a binding site for ATP. Residues D305, E319, and N321 each coordinate Mg(2+).

Belongs to the D-alanine--D-alanine ligase family. Requires Mg(2+) as cofactor. It depends on Mn(2+) as a cofactor.

It localises to the cytoplasm. It catalyses the reaction 2 D-alanine + ATP = D-alanyl-D-alanine + ADP + phosphate + H(+). It participates in cell wall biogenesis; peptidoglycan biosynthesis. Its function is as follows. Cell wall formation. This is D-alanine--D-alanine ligase from Pelodictyon phaeoclathratiforme (strain DSM 5477 / BU-1).